The following is an 803-amino-acid chain: Phenylalanine--tRNA ligase beta subunit (803 aa).

Residues 39–150 (AKVLAPFTIA…ADAPVGAAYA (112 aa)) form the tRNA-binding domain. The region spanning 400 to 475 (ADDKIIDFPL…RIVGVDKVPL (76 aa)) is the B5 domain. 4 residues coordinate Mg(2+): Asp-453, Asp-459, Glu-462, and Glu-463. The FDX-ACB domain occupies 709–802 (SAFHPVSRDF…VTKKTGGSLR (94 aa)).

Belongs to the phenylalanyl-tRNA synthetase beta subunit family. Type 1 subfamily. Tetramer of two alpha and two beta subunits. Requires Mg(2+) as cofactor.

Its subcellular location is the cytoplasm. The enzyme catalyses tRNA(Phe) + L-phenylalanine + ATP = L-phenylalanyl-tRNA(Phe) + AMP + diphosphate + H(+). This is Phenylalanine--tRNA ligase beta subunit from Rhodopseudomonas palustris (strain ATCC BAA-98 / CGA009).